Consider the following 257-residue polypeptide: Probable enoyl-CoA hydratase (257 aa).

This sequence belongs to the enoyl-CoA hydratase/isomerase family.

The enzyme catalyses a (3S)-3-hydroxyacyl-CoA = a (2E)-enoyl-CoA + H2O. The catalysed reaction is a 4-saturated-(3S)-3-hydroxyacyl-CoA = a (3E)-enoyl-CoA + H2O. In terms of biological role, could possibly oxidize fatty acids using specific components. The sequence is that of Probable enoyl-CoA hydratase (fadB1) from Rhodobacter capsulatus (strain ATCC BAA-309 / NBRC 16581 / SB1003).